The chain runs to 407 residues: DAZ-associated protein 1 (407 aa).

M1 carries the N-acetylmethionine modification. RRM domains are found at residues 10–97 (GKLF…RTRP) and 113–190 (NKIF…RAEP). The segment at 74–117 (TLDGRNIDPKPCTPRGMQPERTRPKEGWQKGPRSDNSKSNKIFV) is disordered. Basic and acidic residues predominate over residues 91–111 (QPERTRPKEGWQKGPRSDNSK). K150 bears the N6-acetyllysine mark. The span at 185-194 (VKRAEPRDSK) shows a compositional bias: basic and acidic residues. The segment at 185-407 (VKRAEPRDSK…NVQGFHPYRR (223 aa)) is disordered. Positions 195–207 (SQAPGQPGASQWG) are enriched in polar residues. Positions 247-262 (GPPPAGRGAPPPPPPF) are enriched in pro residues. Omega-N-methylarginine is present on R253. Residues 280-294 (FPQGYGAPPQFSFGY) are compositionally biased toward low complexity. Pro residues predominate over residues 295–315 (GPPPPPPDQFAPPGVPPPPAT). Residues 364–379 (SDPSQQPPSYGGPSVP) are compositionally biased toward low complexity. Positions 380–393 (GSGGPPAGGSGFGR) are enriched in gly residues.

As to quaternary structure, interacts with DAZ and DAZL. In terms of processing, acetylation at Lys-150 is predominantly observed in the nuclear fraction, and may regulate nucleocytoplasmic transport. Mainly expressed in testis. Expressed to a lower level in thymus. Weakly or not expressed in heart, liver, brain, placenta, lung, skeletal muscle, kidney and pancreas.

Its subcellular location is the cytoplasm. It localises to the nucleus. Its function is as follows. RNA-binding protein, which may be required during spermatogenesis. The chain is DAZ-associated protein 1 (DAZAP1) from Homo sapiens (Human).